The primary structure comprises 199 residues: Recombination protein RecR (199 aa).

The C4-type zinc-finger motif lies at 57-72; sequence CQSCRTFTEETYCPIC. The 96-residue stretch at 81 to 176 folds into the Toprim domain; the sequence is DIICVVETPA…MVSRIAHGVP (96 aa).

It belongs to the RecR family.

Its function is as follows. May play a role in DNA repair. It seems to be involved in an RecBC-independent recombinational process of DNA repair. It may act with RecF and RecO. The chain is Recombination protein RecR from Shewanella halifaxensis (strain HAW-EB4).